A 191-amino-acid polypeptide reads, in one-letter code: Orotate phosphoribosyltransferase (191 aa).

Glu114–Ser122 serves as a coordination point for 5-phospho-alpha-D-ribose 1-diphosphate. Residues Thr118 and Arg146 each coordinate orotate.

The protein belongs to the purine/pyrimidine phosphoribosyltransferase family. PyrE subfamily. In terms of assembly, homodimer. The cofactor is Mg(2+).

The catalysed reaction is orotidine 5'-phosphate + diphosphate = orotate + 5-phospho-alpha-D-ribose 1-diphosphate. The protein operates within pyrimidine metabolism; UMP biosynthesis via de novo pathway; UMP from orotate: step 1/2. Its function is as follows. Catalyzes the transfer of a ribosyl phosphate group from 5-phosphoribose 1-diphosphate to orotate, leading to the formation of orotidine monophosphate (OMP). In Caldicellulosiruptor saccharolyticus (strain ATCC 43494 / DSM 8903 / Tp8T 6331), this protein is Orotate phosphoribosyltransferase.